Here is a 1288-residue protein sequence, read N- to C-terminus: Photoreceptor cilium actin regulator (1288 aa).

A lipid anchor (N-myristoyl glycine) is attached at Gly-2. Cys-3 carries the S-palmitoyl cysteine lipid modification. 9 disordered regions span residues 78–147 (MGDP…KWKR), 368–401 (QTSW…QQSP), 423–453 (QPRA…LGTS), 467–527 (PHLS…PFQA), 563–605 (DWSE…SHVE), 686–707 (QKCN…NAIP), 813–1109 (AAKS…EDSQ), 1132–1169 (EAKP…SSGP), and 1190–1288 (LRRT…EEVS). Composition is skewed to polar residues over residues 96–109 (TKTS…SQSH), 382–401 (SVTS…QQSP), and 434–453 (CLSS…LGTS). The span at 483 to 495 (DSEDSSPEEEEED) shows a compositional bias: acidic residues. Composition is skewed to polar residues over residues 848–857 (SPESSKSTEN), 894–904 (SKSTASLTKPH), 927–946 (PPAT…QAEK), and 966–976 (PSGQNRTSESS). Residues 1018 to 1028 (PAQPSPSAVQT) are compositionally biased toward low complexity. 2 stretches are compositionally biased toward pro residues: residues 1051–1063 (PHQP…PPES) and 1071–1094 (PSPP…PPMS). Residues 1097 to 1106 (QEHKETRDSE) show a composition bias toward basic and acidic residues. Residues 1209–1226 (DPTSTSYESQLGQNSSSE) are compositionally biased toward polar residues. Over residues 1268 to 1277 (RTGHIQDKSQ) the composition is skewed to basic and acidic residues. Residues 1278 to 1288 (PEAQPQQEEVS) are compositionally biased toward polar residues.

As to expression, specifically expressed in retina.

It localises to the cell projection. Its subcellular location is the cilium. It is found in the photoreceptor outer segment. The protein resides in the photoreceptor inner segment. In terms of biological role, plays an essential role for normal photoreceptor cell maintenance and vision. The protein is Photoreceptor cilium actin regulator of Homo sapiens (Human).